The chain runs to 424 residues: Tyrosine--tRNA ligase (424 aa).

Tyr37 is an L-tyrosine binding site. The 'HIGH' region signature appears at 42–51 (PTADSLHLGH). L-tyrosine-binding residues include Tyr175 and Gln179. The short motif at 235-239 (KFGKT) is the 'KMSKS' region element. Lys238 lines the ATP pocket. In terms of domain architecture, S4 RNA-binding spans 357-414 (ADLQQALVNAELVPSRGQARTMIGSNAVAINGEKQADPEYVFTDADRLFGRYTLLRRG).

The protein belongs to the class-I aminoacyl-tRNA synthetase family. TyrS type 1 subfamily. As to quaternary structure, homodimer.

It is found in the cytoplasm. The catalysed reaction is tRNA(Tyr) + L-tyrosine + ATP = L-tyrosyl-tRNA(Tyr) + AMP + diphosphate + H(+). Catalyzes the attachment of tyrosine to tRNA(Tyr) in a two-step reaction: tyrosine is first activated by ATP to form Tyr-AMP and then transferred to the acceptor end of tRNA(Tyr). The sequence is that of Tyrosine--tRNA ligase from Yersinia pseudotuberculosis serotype O:1b (strain IP 31758).